Reading from the N-terminus, the 771-residue chain is Polyribonucleotide nucleotidyltransferase (771 aa).

Mg(2+) is bound by residues aspartate 487 and aspartate 493. Positions 554–613 (PRIETMQIDKAKIRDVIGTGGKVIREIVATTGAKVDIDDEGLIKISSSDLDQIEAARKWI) constitute a KH domain. In terms of domain architecture, S1 motif spans 623–691 (GKIYDGKVVN…PRGKVRLSMR (69 aa)). A disordered region spans residues 696–771 (ETGAELEDTR…QGHVPDFLKD (76 aa)). Residues 702 to 771 (EDTRPAREPR…QGHVPDFLKD (70 aa)) are compositionally biased toward basic and acidic residues.

The protein belongs to the polyribonucleotide nucleotidyltransferase family. Requires Mg(2+) as cofactor.

The protein localises to the cytoplasm. It catalyses the reaction RNA(n+1) + phosphate = RNA(n) + a ribonucleoside 5'-diphosphate. Its function is as follows. Involved in mRNA degradation. Catalyzes the phosphorolysis of single-stranded polyribonucleotides processively in the 3'- to 5'-direction. This is Polyribonucleotide nucleotidyltransferase from Sphingopyxis alaskensis (strain DSM 13593 / LMG 18877 / RB2256) (Sphingomonas alaskensis).